A 515-amino-acid polypeptide reads, in one-letter code: 1-pyrroline-5-carboxylate dehydrogenase 2 (515 aa).

Active-site residues include E286 and C320.

This sequence belongs to the aldehyde dehydrogenase family. RocA subfamily.

The catalysed reaction is L-glutamate 5-semialdehyde + NAD(+) + H2O = L-glutamate + NADH + 2 H(+). It participates in amino-acid degradation; L-proline degradation into L-glutamate; L-glutamate from L-proline: step 2/2. In Halalkalibacterium halodurans (strain ATCC BAA-125 / DSM 18197 / FERM 7344 / JCM 9153 / C-125) (Bacillus halodurans), this protein is 1-pyrroline-5-carboxylate dehydrogenase 2 (rocA2).